The primary structure comprises 110 residues: U1-lycotoxin-Ls1cc (110 aa).

Residues 1-20 form the signal peptide; sequence MKFVLLFGVLLVTLFSYSSA. A propeptide spanning residues 21–44 is cleaved from the precursor; that stretch reads EMLDDFDQADEDELLSLIEKEEAR. 4 disulfide bridges follow: C47/C62, C54/C71, C61/C89, and C73/C87.

The protein belongs to the neurotoxin 19 (CSTX) family. 03 subfamily. As to expression, expressed by the venom gland.

The protein resides in the secreted. The protein is U1-lycotoxin-Ls1cc of Lycosa singoriensis (Wolf spider).